The primary structure comprises 291 residues: Pyridoxal 5'-phosphate synthase subunit PdxS (291 aa).

Asp-23 lines the D-ribose 5-phosphate pocket. Lys-80 (schiff-base intermediate with D-ribose 5-phosphate) is an active-site residue. A D-ribose 5-phosphate-binding site is contributed by Gly-152. Arg-164 serves as a coordination point for D-glyceraldehyde 3-phosphate. D-ribose 5-phosphate is bound by residues Gly-213 and 234 to 235 (GS).

It belongs to the PdxS/SNZ family. As to quaternary structure, in the presence of PdxT, forms a dodecamer of heterodimers.

The enzyme catalyses aldehydo-D-ribose 5-phosphate + D-glyceraldehyde 3-phosphate + L-glutamine = pyridoxal 5'-phosphate + L-glutamate + phosphate + 3 H2O + H(+). Its pathway is cofactor biosynthesis; pyridoxal 5'-phosphate biosynthesis. In terms of biological role, catalyzes the formation of pyridoxal 5'-phosphate from ribose 5-phosphate (RBP), glyceraldehyde 3-phosphate (G3P) and ammonia. The ammonia is provided by the PdxT subunit. Can also use ribulose 5-phosphate and dihydroxyacetone phosphate as substrates, resulting from enzyme-catalyzed isomerization of RBP and G3P, respectively. The polypeptide is Pyridoxal 5'-phosphate synthase subunit PdxS (Clostridium acetobutylicum (strain ATCC 824 / DSM 792 / JCM 1419 / IAM 19013 / LMG 5710 / NBRC 13948 / NRRL B-527 / VKM B-1787 / 2291 / W)).